A 106-amino-acid polypeptide reads, in one-letter code: uncharacterized protein (106 aa).

Residues 54-106 (RSTLVATSPRRRSLVQQRRPPLREQNGGSGSSCVSSGGSASTVKTPGSRRASK) are disordered. Residues 84–94 (SSCVSSGGSAS) are compositionally biased toward low complexity.

This is an uncharacterized protein from Human adenovirus C serotype 2 (HAdV-2).